The primary structure comprises 215 residues: Intraflagellar transport protein 43 homolog B (215 aa).

The segment at 1 to 107 is disordered; sequence MDDHLKLGDS…SDGEGDIPVI (107 aa).

The protein belongs to the IFT43 family. In terms of assembly, component of IFT complex A.

Component of IFT complex A (IFT-A) involved in retrograde ciliary transport along microtubules from the ciliary tip to the base. The polypeptide is Intraflagellar transport protein 43 homolog B (ift43b) (Salmo salar (Atlantic salmon)).